The chain runs to 155 residues: Small ribosomal subunit protein uS9 (155 aa).

It belongs to the universal ribosomal protein uS9 family.

The sequence is that of Small ribosomal subunit protein uS9 from Rhizobium etli (strain CIAT 652).